The following is a 226-amino-acid chain: Probable proteasome subunit beta type-1 (226 aa).

The propeptide at 1-24 (MATTVKDTMNVDINAIKKGEIRMG) is removed in mature form. The active-site Nucleophile is Thr25.

This sequence belongs to the peptidase T1B family. As to quaternary structure, the 26S proteasome consists of a 20S proteasome core and two 19S regulatory subunits. The 20S proteasome core is composed of 28 subunits that are arranged in four stacked rings, resulting in a barrel-shaped structure. The two end rings are each formed by seven alpha subunits, and the two central rings are each formed by seven beta subunits. The catalytic chamber with the active sites is on the inside of the barrel.

It is found in the cytoplasm. Its subcellular location is the nucleus. It carries out the reaction Cleavage of peptide bonds with very broad specificity.. The proteasome is a multicatalytic proteinase complex which is characterized by its ability to cleave peptides with Arg, Phe, Tyr, Leu, and Glu adjacent to the leaving group at neutral or slightly basic pH. The proteasome has an ATP-dependent proteolytic activity. The protein is Probable proteasome subunit beta type-1 (pre3) of Schizosaccharomyces pombe (strain 972 / ATCC 24843) (Fission yeast).